The following is a 240-amino-acid chain: Manganese transport system ATP-binding protein MntB (240 aa).

The 233-residue stretch at 1–233 (MEIQGLTIAY…KIQFAYGDAP (233 aa)) folds into the ABC transporter domain. 33–40 (GPNGAGKS) lines the ATP pocket.

This sequence belongs to the ABC transporter superfamily.

Its subcellular location is the cell membrane. Its function is as follows. This protein is probably a component of a manganese permease, a binding protein-dependent, ATP-driven transport system. Probably responsible for energy coupling to the transport system. The protein is Manganese transport system ATP-binding protein MntB (mntB) of Listeria monocytogenes serovar 1/2a (strain ATCC BAA-679 / EGD-e).